We begin with the raw amino-acid sequence, 83 residues long: Short neurotoxin OKI-Ed (83 aa).

An N-terminal signal peptide occupies residues 1–21 (MKTLLLTLVVVTIVCLDLGYT). 4 cysteine pairs are disulfide-bonded: Cys24–Cys45, Cys38–Cys62, Cys64–Cys75, and Cys76–Cys81.

The protein belongs to the three-finger toxin family. Short-chain subfamily. Type I alpha-neurotoxin sub-subfamily. In terms of tissue distribution, expressed by the venom gland.

The protein resides in the secreted. Binds to muscle nicotinic acetylcholine receptor (nAChR) and inhibit acetylcholine from binding to the receptor, thereby impairing neuromuscular transmission. In Laticauda semifasciata (Black-banded sea krait), this protein is Short neurotoxin OKI-Ed.